A 150-amino-acid chain; its full sequence is SsrA-binding protein (150 aa).

It belongs to the SmpB family.

The protein resides in the cytoplasm. In terms of biological role, required for rescue of stalled ribosomes mediated by trans-translation. Binds to transfer-messenger RNA (tmRNA), required for stable association of tmRNA with ribosomes. tmRNA and SmpB together mimic tRNA shape, replacing the anticodon stem-loop with SmpB. tmRNA is encoded by the ssrA gene; the 2 termini fold to resemble tRNA(Ala) and it encodes a 'tag peptide', a short internal open reading frame. During trans-translation Ala-aminoacylated tmRNA acts like a tRNA, entering the A-site of stalled ribosomes, displacing the stalled mRNA. The ribosome then switches to translate the ORF on the tmRNA; the nascent peptide is terminated with the 'tag peptide' encoded by the tmRNA and targeted for degradation. The ribosome is freed to recommence translation, which seems to be the essential function of trans-translation. This chain is SsrA-binding protein, found in Borreliella afzelii (strain PKo) (Borrelia afzelii).